The sequence spans 145 residues: Protein MMF1, mitochondrial (145 aa).

The transit peptide at 1–17 directs the protein to the mitochondrion; that stretch reads MFLRNSVLRTAPVLRRG.

This sequence belongs to the RutC family.

It is found in the mitochondrion matrix. Plays a role in the maintenance of mitochondrial DNA. The protein is Protein MMF1, mitochondrial (MMF1) of Saccharomyces cerevisiae (strain ATCC 204508 / S288c) (Baker's yeast).